We begin with the raw amino-acid sequence, 158 residues long: SsrA-binding protein (158 aa).

Residues Lys-133–Glu-152 show a composition bias toward basic and acidic residues. Residues Lys-133–Gly-158 form a disordered region.

Belongs to the SmpB family.

The protein resides in the cytoplasm. Its function is as follows. Required for rescue of stalled ribosomes mediated by trans-translation. Binds to transfer-messenger RNA (tmRNA), required for stable association of tmRNA with ribosomes. tmRNA and SmpB together mimic tRNA shape, replacing the anticodon stem-loop with SmpB. tmRNA is encoded by the ssrA gene; the 2 termini fold to resemble tRNA(Ala) and it encodes a 'tag peptide', a short internal open reading frame. During trans-translation Ala-aminoacylated tmRNA acts like a tRNA, entering the A-site of stalled ribosomes, displacing the stalled mRNA. The ribosome then switches to translate the ORF on the tmRNA; the nascent peptide is terminated with the 'tag peptide' encoded by the tmRNA and targeted for degradation. The ribosome is freed to recommence translation, which seems to be the essential function of trans-translation. The protein is SsrA-binding protein of Pseudarthrobacter chlorophenolicus (strain ATCC 700700 / DSM 12829 / CIP 107037 / JCM 12360 / KCTC 9906 / NCIMB 13794 / A6) (Arthrobacter chlorophenolicus).